Consider the following 132-residue polypeptide: Large ribosomal subunit protein uL14 (132 aa).

Belongs to the universal ribosomal protein uL14 family. In terms of assembly, part of the 50S ribosomal subunit. Forms a cluster with proteins L3 and L24e, part of which may contact the 16S rRNA in 2 intersubunit bridges.

Binds to 23S rRNA. Forms part of two intersubunit bridges in the 70S ribosome. In Methanococcus maripaludis (strain C7 / ATCC BAA-1331), this protein is Large ribosomal subunit protein uL14.